Consider the following 850-residue polypeptide: PH domain-containing protein YHR131C (850 aa).

Residues 194 to 306 (RIHSDLVHRS…MYLSIGISVS (113 aa)) form the PH domain. Over residues 324 to 338 (RRRRRRRRRRRRHTH) the composition is skewed to basic residues. Disordered stretches follow at residues 324–348 (RRRR…GSFS), 406–428 (SAAS…SGCS), 451–494 (SSRT…GVPV), 583–659 (EASI…TDDS), and 793–850 (TTKD…QITA). Over residues 406–416 (SAASGESSDNS) the composition is skewed to low complexity. Over residues 417 to 428 (TLGSTRSLSGCS) the composition is skewed to polar residues. Basic and acidic residues predominate over residues 479–489 (HHESSGGDHPE). Residues 605–619 (ESATDLSQSSRSLCL) are compositionally biased toward polar residues. Acidic residues-rich tracts occupy residues 626-658 (INDD…DTDD) and 799-850 (DHGE…QITA).

It is found in the cytoplasm. The polypeptide is PH domain-containing protein YHR131C (Saccharomyces cerevisiae (strain ATCC 204508 / S288c) (Baker's yeast)).